Here is a 773-residue protein sequence, read N- to C-terminus: Polyribonucleotide nucleotidyltransferase (773 aa).

Residues aspartate 532 and aspartate 538 each contribute to the Mg(2+) site. Residues 598-657 (PRVITIKVPVDKIGEVIGPKGKVINAITEETGAQISIEDDGTVFVGATDGLSAQAAINKI) enclose the KH domain. Residues 669–738 (GERFLGTVVK…KRGKISLVLV (70 aa)) enclose the S1 motif domain. Residues 749–773 (APADAGAAQEFGSGTAPADAATASS) form a disordered region.

The protein belongs to the polyribonucleotide nucleotidyltransferase family. It depends on Mg(2+) as a cofactor.

The protein resides in the cytoplasm. It catalyses the reaction RNA(n+1) + phosphate = RNA(n) + a ribonucleoside 5'-diphosphate. Functionally, involved in mRNA degradation. Catalyzes the phosphorolysis of single-stranded polyribonucleotides processively in the 3'- to 5'-direction. The protein is Polyribonucleotide nucleotidyltransferase of Mycobacterium leprae (strain Br4923).